The primary structure comprises 75 residues: Parvalbumin beta 3 (75 aa).

At A1 the chain carries N-acetylalanine. The EF-hand domain occupies 26–61 (YKAFFAKKAFFVIDQDKSGFIEEDELKLFLQVFSAG). Ca(2+) is bound by residues D39, D41, S43, F45, E47, and E50.

The protein belongs to the parvalbumin family.

In terms of biological role, in muscle, parvalbumin is thought to be involved in relaxation after contraction. It binds two calcium ions. The polypeptide is Parvalbumin beta 3 (Merluccius gayi (South Pacific hake)).